The following is a 121-amino-acid chain: Ribonuclease P protein component (121 aa).

It belongs to the RnpA family. Consists of a catalytic RNA component (M1 or rnpB) and a protein subunit.

It carries out the reaction Endonucleolytic cleavage of RNA, removing 5'-extranucleotides from tRNA precursor.. In terms of biological role, RNaseP catalyzes the removal of the 5'-leader sequence from pre-tRNA to produce the mature 5'-terminus. It can also cleave other RNA substrates such as 4.5S RNA. The protein component plays an auxiliary but essential role in vivo by binding to the 5'-leader sequence and broadening the substrate specificity of the ribozyme. The protein is Ribonuclease P protein component of Neisseria gonorrhoeae (strain ATCC 700825 / FA 1090).